A 330-amino-acid polypeptide reads, in one-letter code: UPF0324 membrane protein BT_4609 (330 aa).

Helical transmembrane passes span 16–33 (IYVA…LDYI), 38–60 (AWSA…LTCG), 73–95 (YLLQ…LASG), 99–116 (MEFT…GWFI), 128–150 (SYLI…GPVL), 160–182 (ALGT…GHAL), 189–211 (FGTW…AAYG), 221–240 (IKLT…SFIF), 247–269 (ISIP…LLNG), and 284–306 (TLTI…SVGV).

This sequence belongs to the UPF0324 family.

The protein resides in the cell membrane. The sequence is that of UPF0324 membrane protein BT_4609 from Bacteroides thetaiotaomicron (strain ATCC 29148 / DSM 2079 / JCM 5827 / CCUG 10774 / NCTC 10582 / VPI-5482 / E50).